We begin with the raw amino-acid sequence, 141 residues long: Hemoglobin subunit alpha (141 aa).

The 141-residue stretch at 1–141 (VLSSADKANI…VSTVLTSKYR (141 aa)) folds into the Globin domain. Serine 3 carries the phosphoserine modification. Lysine 7 and lysine 11 each carry N6-succinyllysine. Lysine 16 bears the N6-acetyllysine; alternate mark. N6-succinyllysine; alternate is present on lysine 16. A Phosphotyrosine modification is found at tyrosine 24. At lysine 40 the chain carries N6-succinyllysine. The residue at position 49 (serine 49) is a Phosphoserine. Histidine 58 is an O2 binding site. Histidine 87 provides a ligand contact to heme b. Serine 102 is modified (phosphoserine). Phosphothreonine is present on threonine 108. 2 positions are modified to phosphoserine: serine 124 and serine 131. Phosphothreonine is present on residues threonine 134 and threonine 137. Serine 138 is modified (phosphoserine).

This sequence belongs to the globin family. Heterotetramer of two alpha chains and two beta chains. In terms of tissue distribution, red blood cells.

Functionally, involved in oxygen transport from the lung to the various peripheral tissues. In terms of biological role, hemopressin acts as an antagonist peptide of the cannabinoid receptor CNR1. Hemopressin-binding efficiently blocks cannabinoid receptor CNR1 and subsequent signaling. This chain is Hemoglobin subunit alpha (HBA), found in Proteles cristata (Aardwolf).